We begin with the raw amino-acid sequence, 485 residues long: Glycogen synthase (485 aa).

An ADP-alpha-D-glucose-binding site is contributed by Lys15.

Belongs to the glycosyltransferase 1 family. Bacterial/plant glycogen synthase subfamily.

The catalysed reaction is [(1-&gt;4)-alpha-D-glucosyl](n) + ADP-alpha-D-glucose = [(1-&gt;4)-alpha-D-glucosyl](n+1) + ADP + H(+). Its pathway is glycan biosynthesis; glycogen biosynthesis. Synthesizes alpha-1,4-glucan chains using ADP-glucose. The sequence is that of Glycogen synthase from Thermosipho africanus (strain TCF52B).